The chain runs to 494 residues: Glutamyl-tRNA(Gln) amidotransferase subunit A (494 aa).

Residues K81 and S156 each act as charge relay system in the active site. S180 (acyl-ester intermediate) is an active-site residue.

It belongs to the amidase family. GatA subfamily. In terms of assembly, heterotrimer of A, B and C subunits.

The catalysed reaction is L-glutamyl-tRNA(Gln) + L-glutamine + ATP + H2O = L-glutaminyl-tRNA(Gln) + L-glutamate + ADP + phosphate + H(+). Allows the formation of correctly charged Gln-tRNA(Gln) through the transamidation of misacylated Glu-tRNA(Gln) in organisms which lack glutaminyl-tRNA synthetase. The reaction takes place in the presence of glutamine and ATP through an activated gamma-phospho-Glu-tRNA(Gln). The chain is Glutamyl-tRNA(Gln) amidotransferase subunit A from Mycobacterium bovis (strain ATCC BAA-935 / AF2122/97).